We begin with the raw amino-acid sequence, 221 residues long: MVRLVPRAFAATVALLAAGFSPATASADPVLVFPGMEIRQDNHVCTLGYVDPALKIAFTAGHCRGGGAVTSRDYKVIGHLRAFRDNTPSGSTVATHELIADYEAIVLADDVTASNILPSGRALESRPGVVLHPGQAVCHFGVSTGETCGTVESVNNGWFTMSHGVLSEKGDSGGPVYLAPDGGPAQIVGIFNSVWGGFPAAVSWRSTSEQVHADLGVTPLA.

Residues 1-26 (MVRLVPRAFAATVALLAAGFSPATAS) form the signal peptide.

This is an uncharacterized protein from Mycobacterium tuberculosis (strain CDC 1551 / Oshkosh).